Here is a 424-residue protein sequence, read N- to C-terminus: MKIFAQSKPLKATISNIAADKSISHRAVIFSLLSSGTNKIENFLFAEDTEHSLEIARKLGADIEIKEGIVFIDAPKKIVEPDCILECGNSGTSMRLFMGLLASVEGFFVLSGDEYLNERPMKRVGEPLCKVGAKIYGRLDGDKAPLCIQGGKLDFFKFKSKIASAQVKTALILAALNSQGCEYSEPELSRDHSEKMLKKMGADIEISGLNLKVKPLTKPLDPLEIFIPNDPSSAFYYAVAATIIPGSKIILKNMLLNKTRIEAYEVLRKMGANIKFTPKSEIYEQIGDIEISYAPLKAVEVSENISWLIDEAPALAIAFACAKGTSVLRNAKELRVKESDRIKVICEGLKCCGINVTELEDGFKITGGEAEPAIITPYGDHRIAMSFAILGLKCGMIIENSECIATSFPNFGKILKQIGANIED.

Lysine 21, serine 22, and arginine 26 together coordinate 3-phosphoshikimate. A phosphoenolpyruvate-binding site is contributed by lysine 21. Phosphoenolpyruvate contacts are provided by glycine 91 and arginine 119. Residues serine 164, glutamine 166, aspartate 310, and lysine 337 each coordinate 3-phosphoshikimate. A phosphoenolpyruvate-binding site is contributed by glutamine 166. Aspartate 310 functions as the Proton acceptor in the catalytic mechanism. Phosphoenolpyruvate-binding residues include arginine 341 and arginine 382.

The protein belongs to the EPSP synthase family. As to quaternary structure, monomer.

It localises to the cytoplasm. The enzyme catalyses 3-phosphoshikimate + phosphoenolpyruvate = 5-O-(1-carboxyvinyl)-3-phosphoshikimate + phosphate. It functions in the pathway metabolic intermediate biosynthesis; chorismate biosynthesis; chorismate from D-erythrose 4-phosphate and phosphoenolpyruvate: step 6/7. Functionally, catalyzes the transfer of the enolpyruvyl moiety of phosphoenolpyruvate (PEP) to the 5-hydroxyl of shikimate-3-phosphate (S3P) to produce enolpyruvyl shikimate-3-phosphate and inorganic phosphate. This is 3-phosphoshikimate 1-carboxyvinyltransferase from Campylobacter hominis (strain ATCC BAA-381 / DSM 21671 / CCUG 45161 / LMG 19568 / NCTC 13146 / CH001A).